A 394-amino-acid polypeptide reads, in one-letter code: Alanine--glyoxylate aminotransferase (394 aa).

Residues 76–78 (AGH), S153, and Q204 each bind pyridoxal 5'-phosphate. S153 provides a ligand contact to substrate. N6-(pyridoxal phosphate)lysine is present on K205. Y256 and T259 together coordinate pyridoxal 5'-phosphate. R356 is a substrate binding site.

The protein belongs to the class-V pyridoxal-phosphate-dependent aminotransferase family. As to quaternary structure, homodimer. Pyridoxal 5'-phosphate serves as cofactor.

The protein localises to the peroxisome. It catalyses the reaction glyoxylate + L-alanine = glycine + pyruvate. The catalysed reaction is (2S)-2-aminobutanoate + glyoxylate = 2-oxobutanoate + glycine. It carries out the reaction glyoxylate + L-phenylalanine = 3-phenylpyruvate + glycine. The enzyme catalyses glyoxylate + L-serine = 3-hydroxypyruvate + glycine. It catalyses the reaction 2-oxobutanoate + L-alanine = (2S)-2-aminobutanoate + pyruvate. The catalysed reaction is L-phenylalanine + pyruvate = 3-phenylpyruvate + L-alanine. It carries out the reaction L-serine + pyruvate = 3-hydroxypyruvate + L-alanine. Its function is as follows. Catalyzes the pyridoxal 5'-phosphate-dependent transamination of alanine with glyoxylate as an amino group acceptor. Can also catalyze, although with much less efficiency, the transamination of amino-butyrate, phenylalanine and serine with glyoxylate or pyruvate as an amino group acceptor. Does not catalyze the transamination of both 3-hydroxykynurenine and L-kynurenine. May play a role in the detoxification of glyoxylate, a toxic plant metabolite from the fly diet. This is Alanine--glyoxylate aminotransferase from Drosophila melanogaster (Fruit fly).